The sequence spans 1798 residues: Focadhesin (1798 aa).

An N6-acetyllysine modification is found at Lys816.

Interacts with VCL. As to expression, expressed by glial and neuronal cells in brain.

Its subcellular location is the cell junction. The protein resides in the focal adhesion. The protein localises to the cytoplasm. It is found in the cytosol. In terms of biological role, required for the maintenance of SKIC2 and SKIC3 proteostatic levels in the liver. May be involved in the regulation of RNA degradation by the exosome complex. Potential tumor suppressor in gliomas. The sequence is that of Focadhesin (Focad) from Mus musculus (Mouse).